A 206-amino-acid polypeptide reads, in one-letter code: dCTP deaminase, dUMP-forming (206 aa).

Residues 117-122, Asp135, 143-145, Gln163, Tyr177, Lys184, and Gln188 each bind dCTP; these read RSSFGR and TLE. Glu145 (proton donor/acceptor) is an active-site residue.

It belongs to the dCTP deaminase family. As to quaternary structure, homotrimer.

The catalysed reaction is dCTP + 2 H2O = dUMP + NH4(+) + diphosphate. It participates in pyrimidine metabolism; dUMP biosynthesis; dUMP from dCTP: step 1/1. In terms of biological role, bifunctional enzyme that catalyzes both the deamination of dCTP to dUTP and the hydrolysis of dUTP to dUMP without releasing the toxic dUTP intermediate. This chain is dCTP deaminase, dUMP-forming, found in Methanococcus maripaludis (strain DSM 14266 / JCM 13030 / NBRC 101832 / S2 / LL).